Here is a 659-residue protein sequence, read N- to C-terminus: Threonine--tRNA ligase (659 aa).

The region spanning 3-64 (EKIRITLIDN…LEDGRLEIIT (62 aa)) is the TGS domain. Positions 249–555 (DHRRLGQEMD…LIEHHAGRFP (307 aa)) are catalytic. 3 residues coordinate Zn(2+): Cys-354, His-405, and His-532.

This sequence belongs to the class-II aminoacyl-tRNA synthetase family. As to quaternary structure, homodimer. Zn(2+) serves as cofactor.

The protein resides in the cytoplasm. It carries out the reaction tRNA(Thr) + L-threonine + ATP = L-threonyl-tRNA(Thr) + AMP + diphosphate + H(+). Functionally, catalyzes the attachment of threonine to tRNA(Thr) in a two-step reaction: L-threonine is first activated by ATP to form Thr-AMP and then transferred to the acceptor end of tRNA(Thr). Also edits incorrectly charged L-seryl-tRNA(Thr). The chain is Threonine--tRNA ligase from Zymomonas mobilis subsp. mobilis (strain ATCC 31821 / ZM4 / CP4).